The following is a 264-amino-acid chain: Major prion protein (264 aa).

Positions 1–24 (MVKSHIGSWILVLFVAMWSDVGLC) are cleaved as a signal peptide. Positions 25 to 241 (KKRPKPGGGW…ESQAYYQRGA (217 aa)) are interaction with GRB2, ERI3 and SYN1. The tract at residues 28 to 118 (PKPGGGWNTG…QWNKPSKPKT (91 aa)) is disordered. Tandem repeats lie at residues 54 to 62 (PQGGGSWGQ), 63 to 70 (PHGGGWGQ), 71 to 78 (PHGGSWGQ), 79 to 86 (PHGGGWGQ), 87 to 94 (PHGGGWGQ), and 95 to 103 (PHGGGGWGQ). Residues 54–103 (PQGGGSWGQPHGGGWGQPHGGSWGQPHGGGWGQPHGGGWGQPHGGGGWGQ) form a 6 X 8 AA tandem repeats of P-H-G-G-G-W-G-Q region. Positions 55 to 107 (QGGGSWGQPHGGGWGQPHGGSWGQPHGGGWGQPHGGGWGQPHGGGGWGQGGTH) are enriched in gly residues. 12 residues coordinate Cu(2+): H72, G73, G74, H80, G81, G82, H88, G89, G90, H96, G98, and G99. An intrachain disulfide couples C190 to C225. N192 and N208 each carry an N-linked (GlcNAc...) asparagine glycan. A lipid anchor (GPI-anchor amidated alanine) is attached at A241. Positions 242–264 (SVVLFSSPPVVLLISFLIFLIVG) are cleaved as a propeptide — removed in mature form.

This sequence belongs to the prion family. Monomer and homodimer. Has a tendency to aggregate into amyloid fibrils containing a cross-beta spine, formed by a steric zipper of superposed beta-strands. Soluble oligomers may represent an intermediate stage on the path to fibril formation. Copper binding may promote oligomerization. Interacts with GRB2, APP, ERI3/PRNPIP and SYN1. Mislocalized cytosolically exposed PrP interacts with MGRN1; this interaction alters MGRN1 subcellular location and causes lysosomal enlargement. Interacts with KIAA1191.

The protein resides in the cell membrane. The protein localises to the golgi apparatus. Its primary physiological function is unclear. Has cytoprotective activity against internal or environmental stresses. May play a role in neuronal development and synaptic plasticity. May be required for neuronal myelin sheath maintenance. May play a role in iron uptake and iron homeostasis. Soluble oligomers are toxic to cultured neuroblastoma cells and induce apoptosis (in vitro). Association with GPC1 (via its heparan sulfate chains) targets PRNP to lipid rafts. Also provides Cu(2+) or Zn(2+) for the ascorbate-mediated GPC1 deaminase degradation of its heparan sulfate side chains. The chain is Major prion protein (PRNP) from Boselaphus tragocamelus (Nilgai).